A 423-amino-acid polypeptide reads, in one-letter code: Serine hydroxymethyltransferase (423 aa).

(6S)-5,6,7,8-tetrahydrofolate is bound by residues Leu-120 and Gly-124 to Leu-126. Lys-229 is modified (N6-(pyridoxal phosphate)lysine). Ser-353–Phe-355 serves as a coordination point for (6S)-5,6,7,8-tetrahydrofolate.

It belongs to the SHMT family. As to quaternary structure, homodimer. Pyridoxal 5'-phosphate is required as a cofactor.

It localises to the cytoplasm. The enzyme catalyses (6R)-5,10-methylene-5,6,7,8-tetrahydrofolate + glycine + H2O = (6S)-5,6,7,8-tetrahydrofolate + L-serine. It functions in the pathway one-carbon metabolism; tetrahydrofolate interconversion. The protein operates within amino-acid biosynthesis; glycine biosynthesis; glycine from L-serine: step 1/1. In terms of biological role, catalyzes the reversible interconversion of serine and glycine with tetrahydrofolate (THF) serving as the one-carbon carrier. This reaction serves as the major source of one-carbon groups required for the biosynthesis of purines, thymidylate, methionine, and other important biomolecules. Also exhibits THF-independent aldolase activity toward beta-hydroxyamino acids, producing glycine and aldehydes, via a retro-aldol mechanism. The protein is Serine hydroxymethyltransferase of Prochlorococcus marinus (strain MIT 9301).